Reading from the N-terminus, the 532-residue chain is Wee1-like protein kinase 2 (532 aa).

A disordered region spans residues isoleucine 123–serine 166. A Protein kinase domain is found at phenylalanine 188–alanine 465. ATP contacts are provided by residues isoleucine 194–valine 202 and lysine 217. Aspartate 315 (proton acceptor) is an active-site residue. Mg(2+) contacts are provided by asparagine 320 and aspartate 354. A coiled-coil region spans residues alanine 469–leucine 495.

This sequence belongs to the protein kinase superfamily. Ser/Thr protein kinase family. WEE1 subfamily.

The protein localises to the nucleus. It carries out the reaction L-tyrosyl-[protein] + ATP = O-phospho-L-tyrosyl-[protein] + ADP + H(+). Its function is as follows. Oocyte-specific protein tyrosine kinase that phosphorylates and inhibits cdk1 and acts as a key regulator of meiosis. Required to maintain meiotic arrest in oocytes by phosphorylating cdk1 at 'Tyr-15', leading to inhibit cdk1 activity and prevent meiotic reentry. The sequence is that of Wee1-like protein kinase 2 (wee2) from Danio rerio (Zebrafish).